Here is a 337-residue protein sequence, read N- to C-terminus: Nicotinate-nucleotide--dimethylbenzimidazole phosphoribosyltransferase (337 aa).

Catalysis depends on Glu305, which acts as the Proton acceptor.

It belongs to the CobT family.

It catalyses the reaction 5,6-dimethylbenzimidazole + nicotinate beta-D-ribonucleotide = alpha-ribazole 5'-phosphate + nicotinate + H(+). It functions in the pathway nucleoside biosynthesis; alpha-ribazole biosynthesis; alpha-ribazole from 5,6-dimethylbenzimidazole: step 1/2. In terms of biological role, catalyzes the synthesis of alpha-ribazole-5'-phosphate from nicotinate mononucleotide (NAMN) and 5,6-dimethylbenzimidazole (DMB). In Jannaschia sp. (strain CCS1), this protein is Nicotinate-nucleotide--dimethylbenzimidazole phosphoribosyltransferase.